Consider the following 264-residue polypeptide: Claudin-18 (264 aa).

The Cytoplasmic portion of the chain corresponds to 1–6 (MATTTC). The chain crosses the membrane as a helical span at residues 7 to 27 (QVVGLLLSLLGLAGCIAATGM). Residues 28 to 80 (DMWSTQDLYDNPVTAVFQYEGLWRSCVQQSSGFTECRPYFTILGLPAMLQAVR) lie on the Extracellular side of the membrane. Residues 81-101 (ALMIVGIVLGVIGILVSIFAL) traverse the membrane as a helical segment. Topologically, residues 102–122 (KCIRIGSMDDSAKAKMTLTSG) are cytoplasmic. Residues 123–143 (ILFIISGICAIIGVSVFANML) form a helical membrane-spanning segment. Residues 144–176 (VTNFWMSTANMYSGMGGMGGMVQTVQTRYTFGA) are Extracellular-facing. Residues 177 to 197 (ALFVGWVAGGLTLIGGVMMCI) traverse the membrane as a helical segment. The Cytoplasmic segment spans residues 198-264 (ACRGLTPDDS…QSHPTKYDYV (67 aa)). The interval 198–264 (ACRGLTPDDS…QSHPTKYDYV (67 aa)) is required for role in regulation of RANKL-induced osteoclast differentiation. S217 is modified (phosphoserine). Residues 241–264 (KKIYDGGARTEDDEQSHPTKYDYV) are disordered. A compositionally biased stretch (basic and acidic residues) spans 242 to 264 (KIYDGGARTEDDEQSHPTKYDYV).

This sequence belongs to the claudin family. In terms of assembly, interacts with TJP2/ZO-2. Interacts with TJP1/ZO-1. Interacts with YAP1 (phosphorylated); the interaction sequesters YAP1 away from the nucleus and thereby restricts transcription of YAP1 target genes. As to quaternary structure, interacts with CLDN19. In terms of tissue distribution, expressed in the lung (at protein level). Expressed in lung. Expressed in the stomach. As to expression, expressed in lung. In terms of tissue distribution, expressed in stomach. Expressed in bone. Expressed in stomach.

It localises to the cell junction. Its subcellular location is the tight junction. It is found in the cell membrane. The protein resides in the lateral cell membrane. Functionally, involved in alveolar fluid homeostasis via regulation of alveolar epithelial tight junction composition and therefore ion transport and solute permeability, potentially via downstream regulation of the actin cytoskeleton organization and beta-2-adrenergic signaling. Required for lung alveolarization and maintenance of the paracellular alveolar epithelial barrier. Acts to maintain epithelial progenitor cell proliferation and organ size, via regulation of YAP1 localization away from the nucleus and thereby restriction of YAP1 target gene transcription. Acts as a negative regulator of RANKL-induced osteoclast differentiation, potentially via relocation of TJP2/ZO-2 away from the nucleus, subsequently involved in bone resorption in response to calcium deficiency. Mediates the osteoprotective effects of estrogen, potentially via acting downstream of estrogen signaling independently of RANKL signaling pathways. Involved in the maintenance of homeostasis of the alveolar microenvironment via regulation of pH and subsequent T-cell activation in the alveolar space, is therefore indirectly involved in limiting C.neoformans infection. Its function is as follows. Required for the formation of the gastric paracellular barrier via its role in tight junction formation, thereby involved in the response to gastric acidification. The sequence is that of Claudin-18 (Cldn18) from Mus musculus (Mouse).